The following is a 203-amino-acid chain: Glycerol-3-phosphate acyltransferase 1 (203 aa).

A run of 6 helical transmembrane segments spans residues 2–22 (LNFF…SHII), 52–72 (GFPA…FFVW), 82–102 (VIAF…FLKF), 117–137 (VLTK…FSIL), 150–168 (EDAF…YTMW), and 170–190 (VFNG…IVFY).

This sequence belongs to the PlsY family. As to quaternary structure, probably interacts with PlsX.

It is found in the cell inner membrane. The enzyme catalyses an acyl phosphate + sn-glycerol 3-phosphate = a 1-acyl-sn-glycero-3-phosphate + phosphate. Its pathway is lipid metabolism; phospholipid metabolism. Its function is as follows. Catalyzes the transfer of an acyl group from acyl-phosphate (acyl-PO(4)) to glycerol-3-phosphate (G3P) to form lysophosphatidic acid (LPA). This enzyme utilizes acyl-phosphate as fatty acyl donor, but not acyl-CoA or acyl-ACP. This is Glycerol-3-phosphate acyltransferase 1 from Thermotoga maritima (strain ATCC 43589 / DSM 3109 / JCM 10099 / NBRC 100826 / MSB8).